Here is a 537-residue protein sequence, read N- to C-terminus: Cytochrome P450 monooxygenase ltmQ (537 aa).

The chain crosses the membrane as a helical span at residues 10–30 (FPKLNFATIVISGATIIGIIF). 3 N-linked (GlcNAc...) asparagine glycosylation sites follow: Asn-182, Asn-188, and Asn-310. Cys-476 is a heme binding site.

This sequence belongs to the cytochrome P450 family. Heme serves as cofactor.

It localises to the membrane. Its pathway is secondary metabolite biosynthesis. Cytochrome P450 monooxygenase; part of the gene clusters that mediates the biosynthesis of lolitrems, indole-diterpene mycotoxins that are potent tremorgens in mammals, and are synthesized by clavicipitaceous fungal endophytes in association with their grass hosts. The geranylgeranyl diphosphate (GGPP) synthase ltmG is proposed to catalyze the first step in lolitrem biosynthesis. LtmG catalyzes a series of iterative condensations of isopentenyl diphosphate (IPP) with dimethylallyl diphosphate (DMAPP), geranyl diphosphate (GPP), and farnesyl diphosphate (FPP), to form GGPP. GGPP then condenses with indole-3-glycerol phosphate to form 3-geranylgeranylindole, an acyclic intermediate, to be incorporated into paxilline. Either ltmG or ltmC could be responsible for this step, as both are putative prenyl transferases. The FAD-dependent monooxygenase ltmM then catalyzes the epoxidation of the two terminal alkenes of the geranylgeranyl moiety, which is subsequently cyclized by ltmB, to paspaline. The cytochrome P450 monooxygenases ltmQ and ltmP can sequentially oxidize paspaline to terpendole E and terpendole F. Alternatively, ltmP converts paspaline to an intermediate which is oxidized by ltmQ to terpendole F. LtmF, ltmK, ltmE and ltmJ appear to be unique to the epichloe endophytes. The prenyltransferase ltmF is involved in the 27-hydroxyl-O-prenylation. The cytochrome P450 monooxygenase ltmK is required for the oxidative acetal ring formation. The multi-functional prenyltransferase ltmE is required for C20- and C21-prenylations of the indole ring of paspalanes and acts together with the cytochrome P450 monooxygenase ltmJ to yield lolitremanes by multiple oxidations and ring closures. The stereoisomer pairs of lolitriol and lolitrem N or lolitrem B and lolitrem F may be attributed to variations in the way in which ring closure can occur under the action of ltmJ. While the major product of this pathway is lolitrem B, the prenyl transferases and cytochrome P450 monooxygenases identified in this pathway have a remarkable versatility in their regio- and stereo-specificities to generate a diverse range of metabolites that are products of a metabolic grid rather than a linear pathway. In Epichloe festucae var. lolii (Neotyphodium lolii), this protein is Cytochrome P450 monooxygenase ltmQ.